The sequence spans 566 residues: Proline--tRNA ligase (566 aa).

The protein belongs to the class-II aminoacyl-tRNA synthetase family. ProS type 1 subfamily. Homodimer.

It is found in the cytoplasm. It catalyses the reaction tRNA(Pro) + L-proline + ATP = L-prolyl-tRNA(Pro) + AMP + diphosphate. In terms of biological role, catalyzes the attachment of proline to tRNA(Pro) in a two-step reaction: proline is first activated by ATP to form Pro-AMP and then transferred to the acceptor end of tRNA(Pro). As ProRS can inadvertently accommodate and process non-cognate amino acids such as alanine and cysteine, to avoid such errors it has two additional distinct editing activities against alanine. One activity is designated as 'pretransfer' editing and involves the tRNA(Pro)-independent hydrolysis of activated Ala-AMP. The other activity is designated 'posttransfer' editing and involves deacylation of mischarged Ala-tRNA(Pro). The misacylated Cys-tRNA(Pro) is not edited by ProRS. This chain is Proline--tRNA ligase, found in Shouchella clausii (strain KSM-K16) (Alkalihalobacillus clausii).